Reading from the N-terminus, the 414-residue chain is 5-aminolevulinate synthase (414 aa).

Residues arginine 22, serine 133, and lysine 152 each contribute to the substrate site. The pyridoxal 5'-phosphate site is built by serine 185, histidine 213, and threonine 241. Lysine 244 is an active-site residue. At lysine 244 the chain carries N6-(pyridoxal phosphate)lysine. The pyridoxal 5'-phosphate site is built by threonine 273 and threonine 274. Threonine 359 contributes to the substrate binding site.

Belongs to the class-II pyridoxal-phosphate-dependent aminotransferase family. Homodimer. Requires pyridoxal 5'-phosphate as cofactor.

The catalysed reaction is succinyl-CoA + glycine + H(+) = 5-aminolevulinate + CO2 + CoA. It functions in the pathway porphyrin-containing compound metabolism; protoporphyrin-IX biosynthesis; 5-aminolevulinate from glycine: step 1/1. The chain is 5-aminolevulinate synthase (hemA) from Rickettsia typhi (strain ATCC VR-144 / Wilmington).